We begin with the raw amino-acid sequence, 712 residues long: Lactoperoxidase (712 aa).

The N-terminal stretch at 1-22 (MWVCLQLPVFLASVTLFEVAAS) is a signal peptide. Residues 23-100 (DTIAQAASTT…WEESFKRLRR (78 aa)) constitute a propeptide that is removed on maturation. N-linked (GlcNAc...) (complex) asparagine; alternate glycosylation is present at N106. N106 carries an N-linked (GlcNAc...) (hybrid) asparagine; alternate glycan. Disulfide bonds link C123–C284, C132–C145, C246–C256, and C250–C274. N212 carries an N-linked (GlcNAc...) (complex) asparagine; alternate glycan. Residue N212 is glycosylated (N-linked (GlcNAc...) (high mannose) asparagine; alternate). D225 serves as a coordination point for heme b. Catalysis depends on H226, which acts as the Proton acceptor. Ca(2+) is bound at residue D227. 4 residues coordinate Ca(2+): T301, F303, D305, and S307. S315 bears the Phosphoserine mark. The N-linked (GlcNAc...) (high mannose) asparagine glycan is linked to N322. C354 and C365 form a disulfide bridge. N358 carries an N-linked (GlcNAc...) asparagine glycan. E375 is a heme b binding site. Residue N449 is glycosylated (N-linked (GlcNAc...) (complex) asparagine; alternate). N-linked (GlcNAc...) (hybrid) asparagine; alternate glycosylation occurs at N449. A glycan (N-linked (GlcNAc...) (high mannose) asparagine; alternate) is linked at N449. Residue H468 coordinates heme b. Position 482 is a 3'-nitrotyrosine (Y482). Intrachain disulfides connect C573–C630 and C671–C696.

It belongs to the peroxidase family. XPO subfamily. Ca(2+) is required as a cofactor. Requires heme b as cofactor. As to expression, mammary gland; milk.

The protein resides in the secreted. It localises to the cytoplasm. The enzyme catalyses 2 a phenolic donor + H2O2 = 2 a phenolic radical donor + 2 H2O. The catalysed reaction is thiocyanate + H2O2 + H(+) = hypothiocyanous acid + H2O. It carries out the reaction iodide + H2O2 = hypoiodite + H2O. Heme-containing oxidoreductase which catalyzes the conversion of thiocyanate (SCN(-)) into antimicrobial agent hypothiocyanous acid (OSCN(-)) in the presence of hydrogen peroxide (H2O2). Also involved in the conversion of iodide (I(-)) into hypoiodite (IO(-)) in the presence of H2O2. Responsible for the inactivation of a wide range of micro-organisms and hence, important component of defense mechanism. Shows antibacterial properties against E.coli, K.pneumoniae, P.aeruginosa, S.sonnei, S.saphrophyticus, S.epidermidis and S.dysenteriae. May protect the udder from infection and may promote growth in newborns. May be implicated in airway host defense against infection. May contribute to maintaining an appropriate H2O2 cellular level, therefore protecting cells from H2O2-caused injuries and inflammation. The chain is Lactoperoxidase from Bubalus bubalis (Domestic water buffalo).